We begin with the raw amino-acid sequence, 222 residues long: Germin-like protein subfamily 1 member 13 (222 aa).

The first 18 residues, 1-18, serve as a signal peptide directing secretion; that stretch reads MRVSKSLILITLSALVIS. Cysteine 32 and cysteine 49 are joined by a disulfide. A Cupin type-1 domain is found at 63-214; it reads SGLNQAGSTN…AFQLDVNIVE (152 aa). N-linked (GlcNAc...) asparagine glycosylation is present at asparagine 78. The Mn(2+) site is built by histidine 111, histidine 113, glutamate 118, and histidine 160.

It belongs to the germin family. Oligomer (believed to be a pentamer but probably hexamer).

The protein resides in the secreted. It localises to the extracellular space. Its subcellular location is the apoplast. Functionally, may play a role in plant defense. Probably has no oxalate oxidase activity even if the active site is conserved. The protein is Germin-like protein subfamily 1 member 13 (GLP6) of Arabidopsis thaliana (Mouse-ear cress).